Reading from the N-terminus, the 418-residue chain is Gamma-glutamyl phosphate reductase (418 aa).

It belongs to the gamma-glutamyl phosphate reductase family.

The protein resides in the cytoplasm. It catalyses the reaction L-glutamate 5-semialdehyde + phosphate + NADP(+) = L-glutamyl 5-phosphate + NADPH + H(+). Its pathway is amino-acid biosynthesis; L-proline biosynthesis; L-glutamate 5-semialdehyde from L-glutamate: step 2/2. Its function is as follows. Catalyzes the NADPH-dependent reduction of L-glutamate 5-phosphate into L-glutamate 5-semialdehyde and phosphate. The product spontaneously undergoes cyclization to form 1-pyrroline-5-carboxylate. This is Gamma-glutamyl phosphate reductase from Photobacterium profundum (strain SS9).